The sequence spans 419 residues: Glutamyl-tRNA reductase (419 aa).

Substrate-binding positions include 49 to 52 (TCNR), S107, 112 to 114 (EPQ), and Q118. The Nucleophile role is filled by C50. Residue 187-192 (GAGETI) participates in NADP(+) binding.

It belongs to the glutamyl-tRNA reductase family. As to quaternary structure, homodimer.

The enzyme catalyses (S)-4-amino-5-oxopentanoate + tRNA(Glu) + NADP(+) = L-glutamyl-tRNA(Glu) + NADPH + H(+). The protein operates within porphyrin-containing compound metabolism; protoporphyrin-IX biosynthesis; 5-aminolevulinate from L-glutamyl-tRNA(Glu): step 1/2. Functionally, catalyzes the NADPH-dependent reduction of glutamyl-tRNA(Glu) to glutamate 1-semialdehyde (GSA). The protein is Glutamyl-tRNA reductase of Vibrio cholerae serotype O1 (strain ATCC 39541 / Classical Ogawa 395 / O395).